The chain runs to 943 residues: Leucine--tRNA ligase (943 aa).

Positions 40–51 (PYPSGAGLHVGH) match the 'HIGH' region motif. Positions 717 to 721 (KMSKS) match the 'KMSKS' region motif. Lysine 720 is a binding site for ATP.

This sequence belongs to the class-I aminoacyl-tRNA synthetase family.

Its subcellular location is the cytoplasm. The catalysed reaction is tRNA(Leu) + L-leucine + ATP = L-leucyl-tRNA(Leu) + AMP + diphosphate. This is Leucine--tRNA ligase from Bacteroides fragilis (strain YCH46).